We begin with the raw amino-acid sequence, 260 residues long: LOB domain-containing protein 6 (260 aa).

An LOB domain is found at 32-133; the sequence is SPCAACKFLR…QDLARAKYEL (102 aa).

Belongs to the LOB domain-containing protein family. Interacts with RS2. In terms of tissue distribution, expressed in leaves, leaf primordia, immature ears, immature tassels, whole ovules, silk and husk leaves. Found on the adaxial side of organs.

The protein resides in the nucleus. Functionally, promotes the switch from proliferation to differentiation in the embryo sac. Negative regulator of cell proliferation in the adaxial side of leaves. Regulates the formation of a symmetric lamina and the establishment of venation. Interacts directly with RS2 (rough sheath 2) to repress some knox homeobox genes. The chain is LOB domain-containing protein 6 (LBD6) from Zea mays (Maize).